The chain runs to 454 residues: tRNA modification GTPase MnmE (454 aa).

Residues arginine 23, glutamate 80, and lysine 120 each coordinate (6S)-5-formyl-5,6,7,8-tetrahydrofolate. The region spanning 216–377 is the TrmE-type G domain; that stretch reads GMKVVIAGRP…LRDHLKSSMG (162 aa). Asparagine 226 provides a ligand contact to K(+). Residues 226-231, 245-251, 270-273, 335-338, and 358-360 contribute to the GTP site; these read NAGKSS, TDIAGTT, DTAG, NKAD, and SAR. Mg(2+) is bound at residue serine 230. Threonine 245, isoleucine 247, and threonine 250 together coordinate K(+). Threonine 251 is a binding site for Mg(2+). A (6S)-5-formyl-5,6,7,8-tetrahydrofolate-binding site is contributed by lysine 454.

It belongs to the TRAFAC class TrmE-Era-EngA-EngB-Septin-like GTPase superfamily. TrmE GTPase family. Homodimer. Heterotetramer of two MnmE and two MnmG subunits. K(+) is required as a cofactor.

Its subcellular location is the cytoplasm. Its function is as follows. Exhibits a very high intrinsic GTPase hydrolysis rate. Involved in the addition of a carboxymethylaminomethyl (cmnm) group at the wobble position (U34) of certain tRNAs, forming tRNA-cmnm(5)s(2)U34. The protein is tRNA modification GTPase MnmE of Erwinia tasmaniensis (strain DSM 17950 / CFBP 7177 / CIP 109463 / NCPPB 4357 / Et1/99).